A 201-amino-acid polypeptide reads, in one-letter code: Phosphatidylglycerophosphatase and protein-tyrosine phosphatase 1 (201 aa).

Residues 1–27 (MAATALLEAGLARVLFYPTLLYTLFRG) constitute a mitochondrion transit peptide. In terms of domain architecture, Tyrosine-protein phosphatase spans 37 to 188 (WYHRIDPTVL…LKEFHKQITA (152 aa)). The Phosphocysteine intermediate role is filled by C132.

Belongs to the protein-tyrosine phosphatase family. Non-receptor class dual specificity subfamily. In terms of assembly, interacts with STYXL1; the interaction inhibits PTPMT1 catalytic activity.

It localises to the mitochondrion inner membrane. It carries out the reaction a 1,2-diacyl-sn-glycero-3-phospho-(1'-sn-glycero-3'-phosphate) + H2O = a 1,2-diacyl-sn-glycero-3-phospho-(1'-sn-glycerol) + phosphate. The catalysed reaction is O-phospho-L-tyrosyl-[protein] + H2O = L-tyrosyl-[protein] + phosphate. The enzyme catalyses O-phospho-L-seryl-[protein] + H2O = L-seryl-[protein] + phosphate. It catalyses the reaction O-phospho-L-threonyl-[protein] + H2O = L-threonyl-[protein] + phosphate. It carries out the reaction 1,2-di-(9Z-octadecenoyl)-sn-glycero-3-phospho-(1'-sn-glycerol-3'-phosphate) + H2O = 1,2-di-(9Z-octadecenoyl)-sn-glycero-3-phospho-(1'-sn-glycerol) + phosphate. The catalysed reaction is 1,2-dioctanoyl-sn-glycero-3-phospho-(1D-myo-inositol-5-phosphate) + H2O = 1,2-dioctanoyl-sn-glycero-3-phospho-(1D-myo-inositol) + phosphate. The enzyme catalyses a 1-acyl-2-hexanoyl-sn-glycero-3-phospho-(1D-myo-inositol-5-phosphate) + H2O = a 1-acyl-2-hexanoyl-sn-glycero-3-phospho-(1D-myo-inositol) + phosphate. It catalyses the reaction 1,2-dibutyryl-sn-glycero-3-phospho-(1D-myo-inositol-5-phosphate) + H2O = 1,2-dibutyryl-sn-glycero-3-phospho-(1D-myo-inositol) + phosphate. The protein operates within phospholipid metabolism; phosphatidylglycerol biosynthesis; phosphatidylglycerol from CDP-diacylglycerol: step 2/2. Lipid phosphatase which dephosphorylates phosphatidylglycerophosphate (PGP) to phosphatidylglycerol (PG). PGP is an essential intermediate in the biosynthetic pathway of cardiolipin, a mitochondrial-specific phospholipid regulating the membrane integrity and activities of the organelle. Has also been shown to display phosphatase activity toward phosphoprotein substrates, specifically mediates dephosphorylation of mitochondrial proteins, thereby playing an essential role in ATP production. Has probably a preference for proteins phosphorylated on Ser and/or Thr residues compared to proteins phosphorylated on Tyr residues. Probably involved in regulation of insulin secretion in pancreatic beta cells. May prevent intrinsic apoptosis, probably by regulating mitochondrial membrane integrity. The protein is Phosphatidylglycerophosphatase and protein-tyrosine phosphatase 1 of Homo sapiens (Human).